Consider the following 358-residue polypeptide: UDP-N-acetylglucosamine--N-acetylmuramyl-(pentapeptide) pyrophosphoryl-undecaprenol N-acetylglucosamine transferase (358 aa).

UDP-N-acetyl-alpha-D-glucosamine is bound by residues 12-14, R165, S195, and Q290; that span reads TAG.

Belongs to the glycosyltransferase 28 family. MurG subfamily.

The protein localises to the cell membrane. It carries out the reaction di-trans,octa-cis-undecaprenyl diphospho-N-acetyl-alpha-D-muramoyl-L-alanyl-D-glutamyl-meso-2,6-diaminopimeloyl-D-alanyl-D-alanine + UDP-N-acetyl-alpha-D-glucosamine = di-trans,octa-cis-undecaprenyl diphospho-[N-acetyl-alpha-D-glucosaminyl-(1-&gt;4)]-N-acetyl-alpha-D-muramoyl-L-alanyl-D-glutamyl-meso-2,6-diaminopimeloyl-D-alanyl-D-alanine + UDP + H(+). It functions in the pathway cell wall biogenesis; peptidoglycan biosynthesis. Cell wall formation. Catalyzes the transfer of a GlcNAc subunit on undecaprenyl-pyrophosphoryl-MurNAc-pentapeptide (lipid intermediate I) to form undecaprenyl-pyrophosphoryl-MurNAc-(pentapeptide)GlcNAc (lipid intermediate II). The sequence is that of UDP-N-acetylglucosamine--N-acetylmuramyl-(pentapeptide) pyrophosphoryl-undecaprenol N-acetylglucosamine transferase from Clostridium tetani (strain Massachusetts / E88).